A 171-amino-acid chain; its full sequence is Mitochondrial import inner membrane translocase subunit Tim17-A (171 aa).

Cysteines 9 and 78 form a disulfide. 3 helical membrane passes run 17-37 (CGGA…FKGF), 63-77 (GGSF…STID), and 113-133 (VGSA…GILL). The interval 147 to 171 (FAEDHSQLPSSQLPSSPFGDYRQYQ) is disordered. Residues 153 to 163 (QLPSSQLPSSP) are compositionally biased toward low complexity.

Belongs to the Tim17/Tim22/Tim23 family. As to quaternary structure, component of the TIM23 complex at least composed of TIMM23, TIMM17 (TIMM17A or TIMM17B) and TIMM50. The complex interacts with the TIMM44 component of the PAM complex and with DNAJC15. In terms of processing, degraded by YMEL1 downstream of the integrated stress response (ISR).

The protein localises to the mitochondrion inner membrane. Essential component of the TIM23 complex, a complex that mediates the translocation of transit peptide-containing proteins across the mitochondrial inner membrane. The polypeptide is Mitochondrial import inner membrane translocase subunit Tim17-A (Timm17a) (Rattus norvegicus (Rat)).